The primary structure comprises 219 residues: Probable GTP-binding protein EngB (219 aa).

In terms of domain architecture, EngB-type G spans V24–P207. GTP-binding positions include G32–S39, G59–H63, D81–G84, T148–D151, and L185–A188. S39 and T61 together coordinate Mg(2+).

The protein belongs to the TRAFAC class TrmE-Era-EngA-EngB-Septin-like GTPase superfamily. EngB GTPase family. Mg(2+) serves as cofactor.

Its function is as follows. Necessary for normal cell division and for the maintenance of normal septation. The polypeptide is Probable GTP-binding protein EngB (Burkholderia mallei (strain ATCC 23344)).